The following is a 624-amino-acid chain: MFNLLDNYKDVNDIKKMSLDEKKQLALEIREFLIENVSKTGGHLASNLGVVELTLSLFSIFDLNHDKLIWDVGHQAYVHKLLTGRKDKFHTLRQFGGISGFPKKCESVYDFFETGHSSTSISAALGMARARDLKGEKHNVVAVIGDGALTGGMALEALNDVGYRKTKLIIILNDNQMSIGKNVGGVSRYLNKLRVDPKYNKFKEEVESTLKKIPNIGKGMAKYLERLKNGIKKMVVSGMFFEDIGIKYLGPIDGHNIKDLTEVMTAAKKVNNPVIIHVITKKGKGYEFAEKNPGKFHGIGPFNCNNGEIAATSTNTYSKVFGDEMVNLAREDKKIVVITAAMRDGTGLQNFAKEFPERFFDVGIAEQHAVTLAGGMAVEGLKPVFAVYSTFLQRSYDQLLHDICIQKLPVVFAVDRAGIVGDDGETHQGIFDLSYLTEMPNMTVMSPKCMAELTHMLKWALNQNCPIAIRYPRGGDNVYLTPLEDFEFGRWEYILNKGKIALVAQGRMVEHAVLAAEKLEQMGILVRVISACFIKPLDKVMLKKLIEEDVTIITIEDNIIRGGLGSYILEYVNTLHRKVDVINLGFKDEFVRHGKPSILYKLYGLDTGSIVDKVLKVVKLSGIF.

Thiamine diphosphate-binding positions include His74 and 115-117 (GHS). Residue Asp146 participates in Mg(2+) binding. Thiamine diphosphate contacts are provided by residues 147-148 (GA), Asn175, Tyr286, and Glu366. Residue Asn175 participates in Mg(2+) binding.

This sequence belongs to the transketolase family. DXPS subfamily. As to quaternary structure, homodimer. Mg(2+) serves as cofactor. Thiamine diphosphate is required as a cofactor.

It carries out the reaction D-glyceraldehyde 3-phosphate + pyruvate + H(+) = 1-deoxy-D-xylulose 5-phosphate + CO2. It participates in metabolic intermediate biosynthesis; 1-deoxy-D-xylulose 5-phosphate biosynthesis; 1-deoxy-D-xylulose 5-phosphate from D-glyceraldehyde 3-phosphate and pyruvate: step 1/1. Functionally, catalyzes the acyloin condensation reaction between C atoms 2 and 3 of pyruvate and glyceraldehyde 3-phosphate to yield 1-deoxy-D-xylulose-5-phosphate (DXP). This chain is 1-deoxy-D-xylulose-5-phosphate synthase, found in Clostridium kluyveri (strain NBRC 12016).